The sequence spans 805 residues: Ubiquitin carboxyl-terminal hydrolase 5 (805 aa).

In terms of domain architecture, Rhodanese spans His159 to Ser283. Positions Arg359–Thr380 are disordered. One can recognise a USP domain in the interval Val446 to Ile804. The active-site Nucleophile is Cys455. The active-site Proton acceptor is the His761.

It belongs to the peptidase C19 family.

The catalysed reaction is Thiol-dependent hydrolysis of ester, thioester, amide, peptide and isopeptide bonds formed by the C-terminal Gly of ubiquitin (a 76-residue protein attached to proteins as an intracellular targeting signal).. The polypeptide is Ubiquitin carboxyl-terminal hydrolase 5 (UBP5) (Saccharomyces cerevisiae (strain ATCC 204508 / S288c) (Baker's yeast)).